We begin with the raw amino-acid sequence, 226 residues long: Acyl-protein thioesterase 1 homolog 1 (226 aa).

Active-site charge relay system residues include Ser-121, Asp-174, and His-206.

The protein belongs to the AB hydrolase superfamily. AB hydrolase 2 family.

The protein resides in the cytoplasm. It localises to the nucleus. The catalysed reaction is S-hexadecanoyl-L-cysteinyl-[protein] + H2O = L-cysteinyl-[protein] + hexadecanoate + H(+). Its function is as follows. Hydrolyzes fatty acids from S-acylated cysteine residues in proteins with a strong preference for palmitoylated G-alpha proteins over other acyl substrates. Mediates the deacylation of G-alpha proteins such as GPA1 in vivo, but has weak or no activity toward palmitoylated Ras proteins. Has weak lysophospholipase activity in vitro; however such activity may not exist in vivo. This is Acyl-protein thioesterase 1 homolog 1 from Dictyostelium discoideum (Social amoeba).